A 92-amino-acid chain; its full sequence is Sperm-specific protein Phi-1 (92 aa).

The tract at residues 1–92 (MPSPTRRSSK…RVRAKKKKKK (92 aa)) is disordered. Composition is skewed to basic residues over residues 7–19 (RSSKSRSKSRSRS) and 29–92 (AAKR…KKKK).

As to expression, sperm.

The protein localises to the nucleus. It is found in the chromosome. Involved in nuclear basic protein transition: histones are replaced by spermatid specific proteins which are themselves replaced by protamines in late spermatids. This is Sperm-specific protein Phi-1 from Mytilus edulis (Blue mussel).